The chain runs to 597 residues: Elongation factor 4 (597 aa).

The tr-type G domain occupies 2–184; that stretch reads DHIRNFSIIA…ALIAKVPPPK (183 aa). GTP is bound by residues 14–19 and 131–134; these read DHGKST and NKID.

It belongs to the TRAFAC class translation factor GTPase superfamily. Classic translation factor GTPase family. LepA subfamily.

It is found in the cell inner membrane. The catalysed reaction is GTP + H2O = GDP + phosphate + H(+). Functionally, required for accurate and efficient protein synthesis under certain stress conditions. May act as a fidelity factor of the translation reaction, by catalyzing a one-codon backward translocation of tRNAs on improperly translocated ribosomes. Back-translocation proceeds from a post-translocation (POST) complex to a pre-translocation (PRE) complex, thus giving elongation factor G a second chance to translocate the tRNAs correctly. Binds to ribosomes in a GTP-dependent manner. The protein is Elongation factor 4 of Cupriavidus pinatubonensis (strain JMP 134 / LMG 1197) (Cupriavidus necator (strain JMP 134)).